We begin with the raw amino-acid sequence, 372 residues long: Tomoregulin-1 (372 aa).

An N-terminal signal peptide occupies residues 1–36; it reads MGAQAPLRLPAAPPLAVCGYTSVLLLFAFCLPGSRA. Residues 37–322 lie on the Extracellular side of the membrane; sequence SNQPAGGGGD…VPSRQKLTHV (286 aa). An N-linked (GlcNAc...) asparagine glycan is attached at Asn55. Positions 90–137 constitute a Kazal-like 1 domain; sequence ACQFQCHTNYIPVCGSNGDTYQNECFLRRAACKHQKDITVVARGPCYS. 3 disulfide bridges follow: Cys91–Cys121, Cys95–Cys114, and Cys103–Cys135. An N-linked (GlcNAc...) asparagine glycan is attached at Asn139. Residues 139 to 161 are disordered; sequence NGSGSGEGEEEGSGAGAHRKHSK. The Kazal-like 2 domain occupies 181 to 229; the sequence is VCNIDCSGYSFNPVCASDGSSYNNPCFVREASCIKQEQIDIRHLGHCTD. Cystine bridges form between Cys182–Cys213, Cys186–Cys206, Cys195–Cys227, Cys267–Cys280, Cys275–Cys291, and Cys293–Cys302. Positions 263–303 constitute an EGF-like domain; that stretch reads SHMPCPENLNGYCIHGKCEFIYSTQKASCRCESGYTGQHCE. The chain crosses the membrane as a helical span at residues 323-343; it reads LIAAIIGAVQIAIIVAIVMCI. The Cytoplasmic segment spans residues 344–372; the sequence is TRKCPKNNRGRRQKQNLGHFTSDTSSRMV. Residues 351–372 form a disordered region; it reads NRGRRQKQNLGHFTSDTSSRMV. Polar residues predominate over residues 358–372; the sequence is QNLGHFTSDTSSRMV.

It belongs to the tomoregulin family. As to quaternary structure, may interact with ST14. As to expression, maily expressed in neurons. Expressed in brain, neurointermediate lobe, pars distalis, pancreas, ovary and testis.

It localises to the cell membrane. Its function is as follows. Neuron-specific restriction factor that prevents herpes simplex virus 1 (HHV-1) infection in the brain by blocking viral entry. Also able to restrict herpes simplex virus 2 (HHV-2) infection, although to a lesser extent. Acts by preventing the association between the viral glycoprotein D (gD) and its cell surface receptor NECTIN1, thereby inhibiting fusion of the virus and the cell membrane. Also able to prevent the association between the viral glycoprotein B (gB) and MYH9/NMMHC-IIA and MYH10/NMMHC-IIB receptors. This is Tomoregulin-1 from Mus musculus (Mouse).